The following is a 413-amino-acid chain: Phosphopentomutase (413 aa).

Mn(2+) contacts are provided by Asp-11, Asp-306, His-311, Asp-347, His-348, and His-359.

The protein belongs to the phosphopentomutase family. Mn(2+) is required as a cofactor.

The protein localises to the cytoplasm. It carries out the reaction 2-deoxy-alpha-D-ribose 1-phosphate = 2-deoxy-D-ribose 5-phosphate. It catalyses the reaction alpha-D-ribose 1-phosphate = D-ribose 5-phosphate. Its pathway is carbohydrate degradation; 2-deoxy-D-ribose 1-phosphate degradation; D-glyceraldehyde 3-phosphate and acetaldehyde from 2-deoxy-alpha-D-ribose 1-phosphate: step 1/2. Functionally, isomerase that catalyzes the conversion of deoxy-ribose 1-phosphate (dRib-1-P) and ribose 1-phosphate (Rib-1-P) to deoxy-ribose 5-phosphate (dRib-5-P) and ribose 5-phosphate (Rib-5-P), respectively. The chain is Phosphopentomutase from Helicobacter pylori (strain ATCC 700392 / 26695) (Campylobacter pylori).